The sequence spans 101 residues: Defensin-like protein 222 (101 aa).

A signal peptide spans 1-21 (MRTIVLFSTLMILVLSCMSNA). Intrachain disulfides connect C68-C85, C71-C90, and C75-C92.

The protein belongs to the DEFL family.

It localises to the secreted. The chain is Defensin-like protein 222 from Arabidopsis thaliana (Mouse-ear cress).